The primary structure comprises 275 residues: Diaminopimelate epimerase (275 aa).

Substrate is bound by residues asparagine 20 and asparagine 63. The active-site Proton donor is cysteine 72. Substrate-binding positions include 73–74 (GN), asparagine 179, and 197–198 (ER). The active-site Proton acceptor is cysteine 207. 208-209 (GT) is a substrate binding site.

The protein belongs to the diaminopimelate epimerase family. As to quaternary structure, homodimer.

The protein resides in the cytoplasm. The enzyme catalyses (2S,6S)-2,6-diaminopimelate = meso-2,6-diaminopimelate. It functions in the pathway amino-acid biosynthesis; L-lysine biosynthesis via DAP pathway; DL-2,6-diaminopimelate from LL-2,6-diaminopimelate: step 1/1. Functionally, catalyzes the stereoinversion of LL-2,6-diaminopimelate (L,L-DAP) to meso-diaminopimelate (meso-DAP), a precursor of L-lysine and an essential component of the bacterial peptidoglycan. The sequence is that of Diaminopimelate epimerase from Chlamydia trachomatis serovar A (strain ATCC VR-571B / DSM 19440 / HAR-13).